Consider the following 199-residue polypeptide: dITP/XTP pyrophosphatase (199 aa).

8-13 is a substrate binding site; the sequence is SGNAGK. Aspartate 69 acts as the Proton acceptor in catalysis. Residue aspartate 69 participates in Mg(2+) binding. Residues serine 70, 154 to 157, lysine 177, and 182 to 183 each bind substrate; these read FGYN and HR.

This sequence belongs to the HAM1 NTPase family. Homodimer. Mg(2+) is required as a cofactor.

The enzyme catalyses XTP + H2O = XMP + diphosphate + H(+). It carries out the reaction dITP + H2O = dIMP + diphosphate + H(+). It catalyses the reaction ITP + H2O = IMP + diphosphate + H(+). Its function is as follows. Pyrophosphatase that catalyzes the hydrolysis of nucleoside triphosphates to their monophosphate derivatives, with a high preference for the non-canonical purine nucleotides XTP (xanthosine triphosphate), dITP (deoxyinosine triphosphate) and ITP. Seems to function as a house-cleaning enzyme that removes non-canonical purine nucleotides from the nucleotide pool, thus preventing their incorporation into DNA/RNA and avoiding chromosomal lesions. The sequence is that of dITP/XTP pyrophosphatase from Xanthomonas axonopodis pv. citri (strain 306).